The following is a 727-amino-acid chain: Glucans biosynthesis glucosyltransferase H (727 aa).

The disordered stretch occupies residues 18–38 (SAMPNERPGAMEPQNLSKMPE). 7 helical membrane-spanning segments follow: residues 58–78 (FLVVGGALLLSLFAIYEMGAV), 97–117 (VNFCWIALAFCSGIAGFLILL), 278–298 (LQQFAARIYGPVIGTGLGWWV), 408–428 (IMAYLSSPFWLMLILTGLMLA), 460–480 (LFYITMGVLFGPKVFGVLLLL), 496–516 (IFSVIFEVILSALIAPIMMFI), and 572–592 (LLAWMSPALIGLWIAVPISAW).

This sequence belongs to the glycosyltransferase 2 family. OpgH subfamily.

Its subcellular location is the cell inner membrane. The protein operates within glycan metabolism; osmoregulated periplasmic glucan (OPG) biosynthesis. Functionally, involved in the biosynthesis of osmoregulated periplasmic glucans (OPGs). The polypeptide is Glucans biosynthesis glucosyltransferase H (Shewanella baltica (strain OS185)).